We begin with the raw amino-acid sequence, 326 residues long: Ficolin-1 (326 aa).

Residues 1-29 form the signal peptide; that stretch reads MELSRVAVALGPTGQLLLFLSFQTLAAQA. The 39-residue stretch at 55-93 folds into the Collagen-like domain; that stretch reads GLPGAAGPKGEAGANGPKGERGSPGVVGKAGPAGPKGDR. Composition is skewed to low complexity over residues 61-71 and 78-89; these read GPKGEAGANGP and PGVVGKAGPAGP. A disordered region spans residues 61–110; sequence GPKGEAGANGPKGERGSPGVVGKAGPAGPKGDRGEKGARGEKGEPGQLQS. Over residues 90–104 the composition is skewed to basic and acidic residues; the sequence is KGDRGEKGARGEKGE. One can recognise a Fibrinogen C-terminal domain in the interval 109 to 326; the sequence is QSCATGPRTC…QVSEMKVRLT (218 aa). 2 cysteine pairs are disulfide-bonded: cysteine 111–cysteine 139 and cysteine 118–cysteine 146. Residues 115–154 form an a domain; contributes to trimerization region; that stretch reads PRTCKELLTRGHFLSGWHTIYLPDCQPLTVLCDMDTDGGG. The segment at 155–243 is b domain; contributes to trimerization; it reads WTVFQRRSDG…LVLGGFLEGN (89 aa). Residues aspartate 262 and aspartate 264 each coordinate Ca(2+). The N-linked (GlcNAc...) asparagine glycan is linked to asparagine 265. A disulfide bridge links cysteine 270 with cysteine 283. Position 282–284 (282–284) interacts with a carbohydrate; it reads ACH. N-linked (GlcNAc...) asparagine glycosylation is present at asparagine 313. Positions 317 to 326 are p domain; the sequence is QVSEMKVRLT.

Belongs to the ficolin lectin family. As to quaternary structure, homotrimer. Interacts with elastin/ELN. Interacts (via Fibrinogen C-terminal domain) with FFAR2. Interacts with CRP; may regulate monocyte activation by FCN1. In terms of tissue distribution, most abundantly expressed in placenta and lung.

The protein resides in the secreted. It is found in the cell membrane. In terms of biological role, extracellular lectin functioning as a pattern-recognition receptor in innate immunity. Binds the sugar moieties of pathogen-associated molecular patterns (PAMPs) displayed on microbes and activates the lectin pathway of the complement system. May also activate monocytes through a G protein-coupled receptor, FFAR2, inducing the secretion of interleukin-8/IL-8. Binds preferentially to 9-O-acetylated 2-6-linked sialic acid derivatives and to various glycans containing sialic acid engaged in a 2-3 linkage. This is Ficolin-1 (FCN1) from Sus scrofa (Pig).